The primary structure comprises 380 residues: Glucose-1-phosphate adenylyltransferase (380 aa).

Alpha-D-glucose 1-phosphate contacts are provided by residues G164, 179-180 (EK), and S190.

Belongs to the bacterial/plant glucose-1-phosphate adenylyltransferase family. Homotetramer.

It catalyses the reaction alpha-D-glucose 1-phosphate + ATP + H(+) = ADP-alpha-D-glucose + diphosphate. It participates in glycan biosynthesis; glycogen biosynthesis. In terms of biological role, involved in the biosynthesis of ADP-glucose, a building block required for the elongation reactions to produce glycogen. Catalyzes the reaction between ATP and alpha-D-glucose 1-phosphate (G1P) to produce pyrophosphate and ADP-Glc. The chain is Glucose-1-phosphate adenylyltransferase from Lactococcus lactis subsp. lactis (strain IL1403) (Streptococcus lactis).